A 196-amino-acid chain; its full sequence is Large ribosomal subunit protein bL9 (196 aa).

Positions 174–196 are disordered; that stretch reads QAAADLLEGGAGQQASEYTEAQA. Residues 186–196 show a composition bias toward polar residues; the sequence is QQASEYTEAQA.

This sequence belongs to the bacterial ribosomal protein bL9 family.

In terms of biological role, binds to the 23S rRNA. This chain is Large ribosomal subunit protein bL9, found in Phenylobacterium zucineum (strain HLK1).